The primary structure comprises 188 residues: ATP synthase subunit delta (188 aa).

The protein belongs to the ATPase delta chain family. F-type ATPases have 2 components, F(1) - the catalytic core - and F(0) - the membrane proton channel. F(1) has five subunits: alpha(3), beta(3), gamma(1), delta(1), epsilon(1). F(0) has three main subunits: a(1), b(2) and c(10-14). The alpha and beta chains form an alternating ring which encloses part of the gamma chain. F(1) is attached to F(0) by a central stalk formed by the gamma and epsilon chains, while a peripheral stalk is formed by the delta and b chains.

It localises to the cell inner membrane. F(1)F(0) ATP synthase produces ATP from ADP in the presence of a proton or sodium gradient. F-type ATPases consist of two structural domains, F(1) containing the extramembraneous catalytic core and F(0) containing the membrane proton channel, linked together by a central stalk and a peripheral stalk. During catalysis, ATP synthesis in the catalytic domain of F(1) is coupled via a rotary mechanism of the central stalk subunits to proton translocation. Its function is as follows. This protein is part of the stalk that links CF(0) to CF(1). It either transmits conformational changes from CF(0) to CF(1) or is implicated in proton conduction. This chain is ATP synthase subunit delta, found in Agrobacterium fabrum (strain C58 / ATCC 33970) (Agrobacterium tumefaciens (strain C58)).